Consider the following 229-residue polypeptide: Sperm-associated microtubule inner protein 5 (229 aa).

The disordered stretch occupies residues 181 to 201 (PEFSGPGQTPPSEDPQAPRPC).

As to quaternary structure, microtubule inner protein component of sperm flagellar doublet microtubules. Expressed in testis (at protein level).

The protein localises to the cytoplasm. Its subcellular location is the cytoskeleton. The protein resides in the flagellum axoneme. It is found in the nucleus. Functionally, microtubule inner protein (MIP) part of the dynein-decorated doublet microtubules (DMTs) in flagellum axoneme. May serve to reinforce and thus stabilize the microtubule structure in the sperm flagella. In Mus musculus (Mouse), this protein is Sperm-associated microtubule inner protein 5 (Spmip5).